We begin with the raw amino-acid sequence, 668 residues long: Packaging protein UL32 homolog (668 aa).

The span at 1-10 (MNPSTHVSSN) shows a compositional bias: polar residues. Residues 1–35 (MNPSTHVSSNGPTTPPHGPHTTFLPPTSPAPSTSS) are disordered. Over residues 19–35 (PHTTFLPPTSPAPSTSS) the composition is skewed to low complexity. Zn(2+) is bound by residues Cys200, Cys203, His276, and Cys282. The tract at residues 200–282 (CNLCAIISIC…FHLHFFINRC (83 aa)) is zinc finger 1. Basic and acidic residues-rich tracts occupy residues 392 to 401 (SEREDARMMM) and 410 to 419 (GEKGGDDPGR). Residues 392-430 (SEREDARMMMEEEEDEEGGEKGGDDPGRHNGGGTSGGFS) form a disordered region. The Zn(2+) site is built by Cys459, Cys462, His567, and Cys574. Positions 459 to 574 (CLLCELMACS…YKHFFCDPQC (116 aa)) are zinc finger 2.

The protein belongs to the herpesviridae UL32 protein family.

It localises to the host cytoplasm. The protein localises to the host nucleus. In terms of biological role, plays a role in efficient localization of neo-synthesized capsids to nuclear replication compartments, thereby controlling cleavage and packaging of virus genomic DNA. The protein is Packaging protein UL32 homolog (UL52) of Homo sapiens (Human).